The sequence spans 1210 residues: Homeodomain-interacting protein kinase 1 (1210 aa).

K25 participates in a covalent cross-link: Glycyl lysine isopeptide (Lys-Gly) (interchain with G-Cter in SUMO); alternate. K25 is covalently cross-linked (Glycyl lysine isopeptide (Lys-Gly) (interchain with G-Cter in SUMO2); alternate). Glycyl lysine isopeptide (Lys-Gly) (interchain with G-Cter in SUMO2) cross-links involve residues K120 and K124. The 329-residue stretch at 190-518 (YEVLEFLGRG…PLKTLNHQFV (329 aa)) folds into the Protein kinase domain. Residues 196-204 (LGRGTFGQV) and K219 each bind ATP. D315 serves as the catalytic Proton acceptor. The interval 835–856 (QQQSSSLPSKKNKQSAPVSSKS) is disordered. Residues 844–847 (KKNK) carry the Nuclear localization signal 1 (NLS1) motif. S872 carries the post-translational modification Phosphoserine. Residues 885-1093 (PVQDQHQPII…FQHGSPLHST (209 aa)) are interaction with TP53. The required for localization to nuclear speckles stretch occupies residues 891–998 (QPIIIPDTPS…PLKTQLGDCT (108 aa)). Residues 902-926 (PVSVITIRSDTDEEEDNKYKPNSSS) form an SUMO interaction motifs (SIM); required for nuclear localization and kinase activity region. The segment at 938-981 (TVNDSPDSDSSLSSPHPTDTLSALRGNSGTLLEGPGRPAADGIG) is disordered. Over residues 941–959 (DSPDSDSSLSSPHPTDTLS) the composition is skewed to low complexity. K991 participates in a covalent cross-link: Glycyl lysine isopeptide (Lys-Gly) (interchain with G-Cter in SUMO2). 2 disordered regions span residues 1046 to 1069 (LSQN…APRR) and 1084 to 1104 (FQHG…APAH). Low complexity-rich tracts occupy residues 1047–1063 (SQNQ…ERSS) and 1095–1104 (HPHLAPAPAH). S1200 is modified (phosphoserine). K1203 is covalently cross-linked (Glycyl lysine isopeptide (Lys-Gly) (interchain with G-Cter in SUMO)).

This sequence belongs to the protein kinase superfamily. CMGC Ser/Thr protein kinase family. HIPK subfamily. Interacts with Nkx1-2, Nkx2-5, MYB, PARK7, DAXX and p53/TP53. Part of a cytoplasmic complex made of HIPK1, DAB2IP and MAP3K5 in response to TNF. This complex formation promotes MAP3K5-JNK activation and subsequent apoptosis. Post-translationally, phosphorylated and activated by JNK1. Autophosphorylated. Sumoylated. When conjugated it is directed to nuclear speckles. SENP1-mediated desumoylation is mediated by TNF in response to stress stimuli, triggering transient translocation from nucleus to cytoplasm. In terms of tissue distribution, ubiquitously expressed, with high levels in reproductive tissues. Expressed in the epithelial layer of mammary gland, uterus and epididymis, in the corpus luteum, and in post-meiotic round spermatids.

The protein resides in the nucleus. It is found in the cytoplasm. The protein localises to the nucleus speckle. The enzyme catalyses L-seryl-[protein] + ATP = O-phospho-L-seryl-[protein] + ADP + H(+). The catalysed reaction is L-threonyl-[protein] + ATP = O-phospho-L-threonyl-[protein] + ADP + H(+). Its function is as follows. Serine/threonine-protein kinase involved in transcription regulation and TNF-mediated cellular apoptosis. Plays a role as a corepressor for homeodomain transcription factors. Phosphorylates DAXX and MYB. Phosphorylates DAXX in response to stress, and mediates its translocation from the nucleus to the cytoplasm. Inactivates MYB transcription factor activity by phosphorylation. Prevents MAP3K5-JNK activation in the absence of TNF. TNF triggers its translocation to the cytoplasm in response to stress stimuli, thus activating nuclear MAP3K5-JNK by derepression and promoting apoptosis. May be involved in anti-oxidative stress responses. Involved in the regulation of eye size, lens formation and retinal lamination during late embryogenesis. Promotes angiogenesis and to be involved in erythroid differentiation. May be involved in malignant squamous cell tumor formation. Phosphorylates PAGE4 at 'Thr-51' which is critical for the ability of PAGE4 to potentiate the transcriptional activator activity of JUN. The sequence is that of Homeodomain-interacting protein kinase 1 (Hipk1) from Mus musculus (Mouse).